The chain runs to 75 residues: uncharacterized protein (75 aa).

This is an uncharacterized protein from Orgyia pseudotsugata (Douglas-fir tussock moth).